A 408-amino-acid polypeptide reads, in one-letter code: Snake venom 5'-nucleotidase (408 aa).

Residues His54 and His77 each contribute to the Zn(2+) site. 2 N-linked (GlcNAc...) asparagine glycosylation sites follow: Asn167 and Asn181. Disulfide bonds link Cys187–Cys192 and Cys199–Cys221. Arg188 contributes to the AMP binding site. Positions 224, 229, and 252 each coordinate AMP. A disulfide bridge connects residues Cys311 and Cys314. Residues Phe335 and Asp341 each contribute to the AMP site. 2 propeptides (removed in mature form) span residues 385-388 and 385-408; these read DGTL and DGTL…FFIL.

The protein belongs to the 5'-nucleotidase family. Homodimer. In terms of processing, venom 5'-nucleotidases (or a part thereof) may be released into the venom via exosome-like vesicles. They may be attached via a GPI anchor to the membrane of these vesicles. Soluble forms of 5'-nucleotidase might be released by cleavage of the ectodomain in the exosome-like vesicles or venom gland cells. In terms of tissue distribution, expressed by the venom gland.

The protein resides in the membrane. It catalyses the reaction a ribonucleoside 5'-phosphate + H2O = a ribonucleoside + phosphate. It carries out the reaction AMP + H2O = adenosine + phosphate. The catalysed reaction is GMP + H2O = guanosine + phosphate. The enzyme catalyses ADP + H2O = AMP + phosphate + H(+). With respect to regulation, is potently inhibited by metal ions Fe(3+), Cu(2+) and Zn(2+). Is enhanced by Mn(2+). Ca(2+) and Mg(2+) have no effect. In terms of biological role, hydrolyzes nucleotides into nucleosides. Prefers AMP as the substrate but also cleaves GMP and ADP. Does not affect AMP, cAMP and cGMP. Inhibits ADP- and collagen-induced platelet aggregation. Snake venom 5'-nucleotidases are widely distributed among venomous snake taxa, but there is a lack of information about their biological activities. They have been shown to inhibit platelet aggregation. This effect may be due to the liberation of inhibitory AMP or adenosine by its action on ADP released upon initiation of aggregation. Venom 5'-nucleotidases are also known to synergistically act in vivo with other toxins like ADPases, phospholipases, and disintegrins to exert a more pronounced anti-coagulant effect. This chain is Snake venom 5'-nucleotidase, found in Macrovipera lebetinus (Levantine viper).